The chain runs to 572 residues: Oxygen-dependent choline dehydrogenase (572 aa).

7 to 36 serves as a coordination point for FAD; the sequence is DYIIIGAGSAGNVLATRLTEDRDVTVLLLE. Residue histidine 474 is the Proton acceptor of the active site.

Belongs to the GMC oxidoreductase family. FAD is required as a cofactor.

It catalyses the reaction choline + A = betaine aldehyde + AH2. The enzyme catalyses betaine aldehyde + NAD(+) + H2O = glycine betaine + NADH + 2 H(+). The protein operates within amine and polyamine biosynthesis; betaine biosynthesis via choline pathway; betaine aldehyde from choline (cytochrome c reductase route): step 1/1. Functionally, involved in the biosynthesis of the osmoprotectant glycine betaine. Catalyzes the oxidation of choline to betaine aldehyde and betaine aldehyde to glycine betaine at the same rate. This is Oxygen-dependent choline dehydrogenase from Paraburkholderia phymatum (strain DSM 17167 / CIP 108236 / LMG 21445 / STM815) (Burkholderia phymatum).